The primary structure comprises 109 residues: Cell division suppressor protein YneA (109 aa).

In terms of domain architecture, LysM spans 40–94; that stretch reads STVTITKGDTLWELSNKYHNHHHLTTNEFVKWVEDVNDLNSDTAQSLSPGDKLYI.

This sequence belongs to the YneA family.

The protein resides in the cytoplasm. Inhibits cell division during the SOS response. Affects a later stage of the cell division protein assembly, after the assembly of the Z ring, by probably suppressing recruitment of FtsL and/or DivIC to the division machinery. The protein is Cell division suppressor protein YneA of Priestia megaterium (strain DSM 319 / IMG 1521) (Bacillus megaterium).